The chain runs to 481 residues: GDP-fucose protein O-fucosyltransferase 2 (481 aa).

An N-terminal signal peptide occupies residues 1–22 (MKGRAHIWVALLLACLPPRFRN). GDP-beta-L-fucose is bound by residues 59–63 (GEGFN), 287–289 (HLR), aspartate 365, and 382–383 (RF). Glutamate 60 functions as the Proton acceptor in the catalytic mechanism.

It belongs to the glycosyltransferase 68 family.

The protein localises to the endoplasmic reticulum. It catalyses the reaction L-seryl-[protein] + GDP-beta-L-fucose = 3-O-(alpha-L-fucosyl)-L-seryl-[protein] + GDP + H(+). It carries out the reaction L-threonyl-[protein] + GDP-beta-L-fucose = 3-O-(alpha-L-fucosyl)-L-threonyl-[protein] + GDP + H(+). It functions in the pathway protein modification; protein glycosylation. In terms of biological role, catalyzes the reaction that attaches fucose through an O-glycosidic linkage to a conserved serine or threonine residue in the consensus sequence C1-X-X-S/T-C2 of thrombospondin type I repeats (TSRs) where C1 and C2 are the first and second cysteines of the repeat, respectively. O-fucosylates sporozoite proteins CSP and TRAP. O-fucosylation regulates stability and intracellular trafficking of TRAP but not of CSP. Probably by regulating protein O-fucosylation, may play a role in parasite transmission to the mosquito vector and/or infection of the vertebrate host hepatocytes; however, POFUT2 involvement in transmission/infection is controversial. This Plasmodium vivax (strain Salvador I) protein is GDP-fucose protein O-fucosyltransferase 2.